We begin with the raw amino-acid sequence, 253 residues long: Complement C1q subcomponent subunit B (253 aa).

The N-terminal stretch at M1 to A25 is a signal peptide. Pyrrolidone carboxylic acid is present on Q26. The region spanning C29–G112 is the Collagen-like domain. The tract at residues C29–Y114 is disordered. 4-hydroxyproline occurs at positions 33, 36, 39, 51, and 54. 2 positions are modified to 5-hydroxylysine: K57 and K60. P63 is subject to 4-hydroxyproline. The segment covering D68–D77 has biased composition (basic and acidic residues). Position 75 is a 5-hydroxylysine (K75). A compositionally biased stretch (low complexity) spans A78–K96. P81 and P84 each carry 4-hydroxyproline. Residues K90 and K96 each carry the 5-hydroxylysine modification. 4-hydroxyproline is present on residues P99 and P102. The residue at position 108 (K108) is a 5-hydroxylysine. The 139-residue stretch at K115–V253 folds into the C1q domain. A disulfide bridge links C179 with C198. Ca(2+) contacts are provided by D199, Y200, and Q206.

As to quaternary structure, core component of the complement C1 complex, a calcium-dependent complex composed of 1 molecule of the C1Q subcomplex, 2 molecules of C1R and 2 molecules of C1S. The C1Q subcomplex is composed 18 subunits: 3 chains of C1QA, C1QB, and C1QC trimerize to form 6 collagen-like triple helices connected to six globular ligand-recognition modules (C1q domain). In terms of processing, hydroxylated on lysine and proline residues. Hydroxylated lysine residues can be glycosylated. Human C1Q contains up to 68.3 hydroxylysine-galactosylglucose residues and up to 2.5 hydroxylysine-galactose per molecule. Total percentage hydroxylysine residues glycosylated is 86.4%. In terms of tissue distribution, highest levels in spleen, lung and brain. Weaker expression in kidney and liver. In the spleen, localized mainly to the red pulp, in cells mainly of monocyte-macrophage lineage. In white pulp, localized in specific dendritic cells such as those from the periarteriolar lymphatic sheath (PALS).

The protein resides in the secreted. It is found in the cell surface. Its activity is regulated as follows. The C1Q subcomplex is inhibited by sulfated molecules, such as triterpenoid sulfates, heparan sulfate, or chondroitin sulfates. In terms of biological role, core component of the complement C1 complex, a multiprotein complex that initiates the classical pathway of the complement system, a cascade of proteins that leads to phagocytosis and breakdown of pathogens and signaling that strengthens the adaptive immune system. The classical complement pathway is initiated by the C1Q subcomplex of the C1 complex, which specifically binds IgG or IgM immunoglobulins complexed with antigens, forming antigen-antibody complexes on the surface of pathogens: C1QA, together with C1QB and C1QC, specifically recognizes and binds the Fc regions of IgG or IgM via its C1q domain. Immunoglobulin-binding activates the proenzyme C1R, which cleaves C1S, initiating the proteolytic cascade of the complement system. The C1Q subcomplex is activated by a hexamer of IgG complexed with antigens, while it is activated by a pentameric IgM. The C1Q subcomplex also recognizes and binds phosphatidylserine exposed on the surface of cells undergoing programmed cell death, possibly promoting activation of the complement system. This Rattus norvegicus (Rat) protein is Complement C1q subcomponent subunit B.